The chain runs to 211 residues: MANSGLQLLGFSMALLGWVGLVACTAIPQWQMSSYAGDNIITAQAMYKGLWMDCVTQSTGMMSCKMYDSVLALSAALQATRALMVVSLVLGFLAMFVATMGMKCTRCGGDDKVKKARIAMGGGIIFIVAGLAALVACSWYGHQIVTDFYNPLIPTNIKYEFGPAIFIGWAGSALVILGGALLSCSCPGNESKAGYRVPRSYPKSNSSKEYV.

Residues 1–7 are Cytoplasmic-facing; the sequence is MANSGLQ. Residues 8 to 28 traverse the membrane as a helical segment; the sequence is LLGFSMALLGWVGLVACTAIP. The Extracellular portion of the chain corresponds to 29-81; the sequence is QWQMSSYAGDNIITAQAMYKGLWMDCVTQSTGMMSCKMYDSVLALSAALQATR. A helical membrane pass occupies residues 82 to 102; it reads ALMVVSLVLGFLAMFVATMGM. Residues 103 to 117 lie on the Cytoplasmic side of the membrane; that stretch reads KCTRCGGDDKVKKAR. Residues 118–138 traverse the membrane as a helical segment; it reads IAMGGGIIFIVAGLAALVACS. At 139 to 160 the chain is on the extracellular side; it reads WYGHQIVTDFYNPLIPTNIKYE. A helical transmembrane segment spans residues 161-181; it reads FGPAIFIGWAGSALVILGGAL. The Cytoplasmic segment spans residues 182 to 211; it reads LSCSCPGNESKAGYRVPRSYPKSNSSKEYV. Positions 210–211 are interactions with TJP1, TJP2 and TJP3; that stretch reads YV.

Belongs to the claudin family. Directly interacts with TJP1/ZO-1, TJP2/ZO-2 and TJP3/ZO-3. The phosphorylated form interacts with EPCAM. Does not interact with CD81. In terms of processing, phosphorylated. In terms of tissue distribution, expressed in kidney, lung and prostate. Isoform 1 seems to be predominant, except in some normal prostate samples, where isoform 2 is the major form. Down-regulated in breast cancers, including ductal carcinoma in situ (DCIS), lobular carcinoma in situ (LCIS) and invasive ductal carcinoma (IDC) (at protein level), as well as in several cancer cell lines. Loss of expression correlates with histological grade, occurring predominantly in high-grade lesions.

It localises to the cell membrane. It is found in the basolateral cell membrane. Its subcellular location is the cell junction. The protein localises to the tight junction. Its function is as follows. Plays a major role in tight junction-specific obliteration of the intercellular space. This chain is Claudin-7 (CLDN7), found in Homo sapiens (Human).